The sequence spans 160 residues: SsrA-binding protein (160 aa).

This sequence belongs to the SmpB family.

It is found in the cytoplasm. Required for rescue of stalled ribosomes mediated by trans-translation. Binds to transfer-messenger RNA (tmRNA), required for stable association of tmRNA with ribosomes. tmRNA and SmpB together mimic tRNA shape, replacing the anticodon stem-loop with SmpB. tmRNA is encoded by the ssrA gene; the 2 termini fold to resemble tRNA(Ala) and it encodes a 'tag peptide', a short internal open reading frame. During trans-translation Ala-aminoacylated tmRNA acts like a tRNA, entering the A-site of stalled ribosomes, displacing the stalled mRNA. The ribosome then switches to translate the ORF on the tmRNA; the nascent peptide is terminated with the 'tag peptide' encoded by the tmRNA and targeted for degradation. The ribosome is freed to recommence translation, which seems to be the essential function of trans-translation. In Pasteurella multocida (strain Pm70), this protein is SsrA-binding protein.